The chain runs to 616 residues: MRALLLLGILLVSLESALLIPPWKDPRKHKVMASEHTVVLTVTGEPCHFPFQYYRQLYYKCIQRGQRGPRPWCATTPNFEKDQRWAYCLEPMKVKDHCNKGNPCQKGGTCVNMPNGPHCICPDHFTGKHCQKEKCFEPQFLQFFQENEIWHRFEPAGVSKCQCKGPKAQCKPVASQVCSTNPCLNGGSCLQTEGHRLCRCPTGYAGRLCDVDLKERCYSDRGLSYRGMAQTTLSGAPCQPWASEATYWNMTAEQALNWGLGDHAFCRNPDNDTRPWCFVWRGDQLSWQYCRLARCQAPIGEAPPILTPTQSPSEHQDSPLLSREPQPTTQTPSQNLTSAWCAPPEQRGPLPSAGLVGCGQRLRKRLSSLNRIVGGLVALPGAHPYIAALYWGQNFCAGSLIAPCWVLTAAHCLQNRPAPEELTVVLGQDRHNQSCEQCQTLAVRSYRLHESYSPKTYQHDLALVRLKETADGCCAHPSPFVQPVCLPRSVASSAEPEGALCEVAGWGHQFEGAEEYSSFLQEAQVPLISPERCSAADVHGAAFTPGMLCAGFLEGGTDACQGDSGGPLVCEDETAERQLVLRGIVSWGSGCGDRLKPGVYTDVANYLAWIQEHTTS.

An N-terminal signal peptide occupies residues 1-19 (MRALLLLGILLVSLESALL). A Fibronectin type-II domain is found at 42–90 (VTGEPCHFPFQYYRQLYYKCIQRGQRGPRPWCATTPNFEKDQRWAYCLE). 13 cysteine pairs are disulfide-bonded: Cys-47–Cys-73, Cys-61–Cys-88, Cys-98–Cys-110, Cys-104–Cys-119, Cys-121–Cys-130, Cys-135–Cys-163, Cys-161–Cys-170, Cys-178–Cys-189, Cys-183–Cys-198, Cys-200–Cys-209, Cys-217–Cys-295, Cys-238–Cys-277, and Cys-266–Cys-290. The EGF-like 1 domain maps to 94–131 (VKDHCNKGNPCQKGGTCVNMPNGPHCICPDHFTGKHCQ). A glycan (O-linked (Fuc) threonine) is linked at Thr-109. The Fibronectin type-I domain occupies 133–173 (EKCFEPQFLQFFQENEIWHRFEPAGVSKCQCKGPKAQCKPV). The EGF-like 2 domain occupies 174 to 210 (ASQVCSTNPCLNGGSCLQTEGHRLCRCPTGYAGRLCD). Residues 216 to 295 (RCYSDRGLSY…SWQYCRLARC (80 aa)) enclose the Kringle domain. Asn-249, Asn-271, and Asn-335 each carry an N-linked (GlcNAc...) asparagine glycan. The interval 303–342 (PPILTPTQSPSEHQDSPLLSREPQPTTQTPSQNLTSAWCA) is disordered. Positions 325–338 (PQPTTQTPSQNLTS) are enriched in polar residues. 7 cysteine pairs are disulfide-bonded: Cys-358–Cys-485, Cys-396–Cys-412, Cys-404–Cys-474, Cys-435–Cys-438, Cys-501–Cys-570, Cys-533–Cys-549, and Cys-560–Cys-591. The Peptidase S1 domain maps to 372–615 (IVGGLVALPG…YLAWIQEHTT (244 aa)). The active-site Charge relay system is His-411. Asn-432 carries N-linked (GlcNAc...) asparagine glycosylation. Asp-460 acts as the Charge relay system in catalysis. Residue Ser-564 is the Charge relay system of the active site.

The protein belongs to the peptidase S1 family. In terms of assembly, interacts with HRG; the interaction, which is enhanced in the presence of zinc ions and inhibited by heparin-binding, inhibits factor XII autoactivation and contact-initiated coagulation. Post-translationally, O- and N-glycosylated.

The protein localises to the secreted. The catalysed reaction is Selective cleavage of Arg-|-Ile bonds in factor VII to form factor VIIa and factor XI to form factor XIa.. With respect to regulation, activity is promoted in the presence of negatively charged surfaces. Functionally, factor XII is a serum glycoprotein that participates in the initiation of blood coagulation, fibrinolysis, and the generation of bradykinin and angiotensin. Prekallikrein is cleaved by factor XII to form kallikrein, which then cleaves factor XII first to alpha-factor XIIa and then trypsin cleaves it to beta-factor XIIa. Alpha-factor XIIa activates factor XI to factor XIa. The protein is Coagulation factor XII (F12) of Sus scrofa (Pig).